We begin with the raw amino-acid sequence, 199 residues long: MLKTIKSWILGKRNQEINQLISPRPSTSLNSYSAPTPKKTYRKTTQSTQEPSNSAPPSVNQKSNQQKQVKKLVDQLTKIDSLGHHTNVQQKQKIEILIRKLYREDLGEEAAQIVELRLWSLEESLEASQILKMEPKTRRILISMKLERWIRTLLRGKCDNLQMFQARYQEVMSYLQQNKVETVIMEEAWNLSVHLIQDQ.

Composition is skewed to polar residues over residues 19-34 (QLISPRPSTSLNSYSA) and 43-57 (KTTQSTQEPSNSAPP). The tract at residues 19-67 (QLISPRPSTSLNSYSAPTPKKTYRKTTQSTQEPSNSAPPSVNQKSNQQK) is disordered. The segment covering 58–67 (SVNQKSNQQK) has biased composition (low complexity).

It belongs to the respirovirus protein C family.

The chain is Protein C (P/V/C) from Human parainfluenza 3 virus (strain Wash/47885/57) (HPIV-3).